The sequence spans 315 residues: THO complex subunit 3 (315 aa).

WD repeat units lie at residues 18–57 (GHKK…HSKA), 64–104 (GHTD…CTQQ), 106–145 (ELSG…PLHR), 189–228 (AHTA…CLRT), 231–270 (KLEW…TVHQ), and 272–311 (PCRA…RIFG).

Belongs to the THOC3 family. Component of the THO complex, which is composed of THO1, THO2, THO3, THO5, THO6 and THO7.

It localises to the nucleus. Its function is as follows. Acts as a component of the THO subcomplex of the TREX complex which is thought to couple mRNA transcription, processing and nuclear export. Contributes to the integrity of the endogenous trans-acting small interfering RNA (ta-siRNA) pathway. May process or transport a long RNA molecule so that it can be a template for secondary siRNA production. May participate in the trafficking of siRNA precursors to the ARGONAUTE catalytic center. Required for the generation of functional messenger ribonucleoproteins (mRNPs). This Arabidopsis thaliana (Mouse-ear cress) protein is THO complex subunit 3 (THO3).